A 59-amino-acid chain; its full sequence is Crassipeptide cce9a (59 aa).

The propeptide occupies 1-30; that stretch reads ADNHARVAGPRAVASGRYATEKAFLQMMTR.

Post-translationally, contains 3 disulfide bonds. As to expression, expressed by the venom duct.

It localises to the secreted. In terms of biological role, crassispirid snail peptide that induces sleep-like symptoms in young mice (12 and 14 days) and hyperactivity in older mice (16 days), when intracranially injected. This Crassispira cerithina (Sea snail) protein is Crassipeptide cce9a.